The following is a 342-amino-acid chain: MRKDYLNSNKDSLSAPEKEIERALRPHVFADFTGQEKIVANLKIFVQAAKERKEPLDHVLLHGPPGLGKTTLAHIIANELGANIRITSGPVLDKPGDLAGLLTNLGPYDVLFIDEIHRLNPIVEEYLYTAMEDFKIDIMLDSGPSARSVQLNLNPFTLIGATTRSGLLTSPLRARFGINTRLAYYDVTLLTQIVKRSSQILNVPIEESAAYELARRSRGTPRIANTLLRRTRDFAQITGSGTITQQIAQMALKALDVDEDGLDEMDNRILSTIIEKFHGGPVGISTIATACSEESETIEEVYEPFLIQEGYLHRTPRGREATPKAYKHLKLAPPQRAGTLFE.

A large ATPase domain (RuvB-L) region spans residues 1–185 (MRKDYLNSNK…FGINTRLAYY (185 aa)). ATP contacts are provided by residues Leu-24, Arg-25, Gly-66, Lys-69, Thr-70, Thr-71, 132 to 134 (EDF), Arg-175, Tyr-185, and Arg-222. Thr-70 contacts Mg(2+). Residues 186–256 (DVTLLTQIVK…IAQMALKALD (71 aa)) form a small ATPAse domain (RuvB-S) region. The interval 259–342 (EDGLDEMDNR…PPQRAGTLFE (84 aa)) is head domain (RuvB-H). Residues Arg-314 and Arg-319 each contribute to the DNA site.

It belongs to the RuvB family. Homohexamer. Forms an RuvA(8)-RuvB(12)-Holliday junction (HJ) complex. HJ DNA is sandwiched between 2 RuvA tetramers; dsDNA enters through RuvA and exits via RuvB. An RuvB hexamer assembles on each DNA strand where it exits the tetramer. Each RuvB hexamer is contacted by two RuvA subunits (via domain III) on 2 adjacent RuvB subunits; this complex drives branch migration. In the full resolvosome a probable DNA-RuvA(4)-RuvB(12)-RuvC(2) complex forms which resolves the HJ.

Its subcellular location is the cytoplasm. It catalyses the reaction ATP + H2O = ADP + phosphate + H(+). Its function is as follows. The RuvA-RuvB-RuvC complex processes Holliday junction (HJ) DNA during genetic recombination and DNA repair, while the RuvA-RuvB complex plays an important role in the rescue of blocked DNA replication forks via replication fork reversal (RFR). RuvA specifically binds to HJ cruciform DNA, conferring on it an open structure. The RuvB hexamer acts as an ATP-dependent pump, pulling dsDNA into and through the RuvAB complex. RuvB forms 2 homohexamers on either side of HJ DNA bound by 1 or 2 RuvA tetramers; 4 subunits per hexamer contact DNA at a time. Coordinated motions by a converter formed by DNA-disengaged RuvB subunits stimulates ATP hydrolysis and nucleotide exchange. Immobilization of the converter enables RuvB to convert the ATP-contained energy into a lever motion, pulling 2 nucleotides of DNA out of the RuvA tetramer per ATP hydrolyzed, thus driving DNA branch migration. The RuvB motors rotate together with the DNA substrate, which together with the progressing nucleotide cycle form the mechanistic basis for DNA recombination by continuous HJ branch migration. Branch migration allows RuvC to scan DNA until it finds its consensus sequence, where it cleaves and resolves cruciform DNA. The protein is Holliday junction branch migration complex subunit RuvB of Amoebophilus asiaticus (strain 5a2).